A 374-amino-acid polypeptide reads, in one-letter code: Queuine tRNA-ribosyltransferase (374 aa).

Aspartate 89 (proton acceptor) is an active-site residue. Substrate is bound by residues 89–93 (DSGGF), aspartate 143, glutamine 187, and glycine 214. Positions 245 to 251 (GVGKPED) are RNA binding. Aspartate 264 (nucleophile) is an active-site residue. The tract at residues 269-273 (TRNAR) is RNA binding; important for wobble base 34 recognition. The Zn(2+) site is built by cysteine 302, cysteine 304, cysteine 307, and histidine 333.

This sequence belongs to the queuine tRNA-ribosyltransferase family. In terms of assembly, homodimer. Within each dimer, one monomer is responsible for RNA recognition and catalysis, while the other monomer binds to the replacement base PreQ1. It depends on Zn(2+) as a cofactor.

The catalysed reaction is 7-aminomethyl-7-carbaguanine + guanosine(34) in tRNA = 7-aminomethyl-7-carbaguanosine(34) in tRNA + guanine. It functions in the pathway tRNA modification; tRNA-queuosine biosynthesis. In terms of biological role, catalyzes the base-exchange of a guanine (G) residue with the queuine precursor 7-aminomethyl-7-deazaguanine (PreQ1) at position 34 (anticodon wobble position) in tRNAs with GU(N) anticodons (tRNA-Asp, -Asn, -His and -Tyr). Catalysis occurs through a double-displacement mechanism. The nucleophile active site attacks the C1' of nucleotide 34 to detach the guanine base from the RNA, forming a covalent enzyme-RNA intermediate. The proton acceptor active site deprotonates the incoming PreQ1, allowing a nucleophilic attack on the C1' of the ribose to form the product. After dissociation, two additional enzymatic reactions on the tRNA convert PreQ1 to queuine (Q), resulting in the hypermodified nucleoside queuosine (7-(((4,5-cis-dihydroxy-2-cyclopenten-1-yl)amino)methyl)-7-deazaguanosine). The sequence is that of Queuine tRNA-ribosyltransferase from Psychromonas ingrahamii (strain DSM 17664 / CCUG 51855 / 37).